Here is a 105-residue protein sequence, read N- to C-terminus: Malonate decarboxylase acyl carrier protein (105 aa).

Position 28 is an O-(phosphoribosyl dephospho-coenzyme A)serine (Ser28).

The protein belongs to the MdcC family. Covalently binds the prosthetic group of malonate decarboxylase.

The protein resides in the cytoplasm. Functionally, subunit of malonate decarboxylase, it is an acyl carrier protein to which acetyl and malonyl thioester residues are bound via a 2'-(5''-phosphoribosyl)-3'-dephospho-CoA prosthetic group and turn over during the catalytic mechanism. This is Malonate decarboxylase acyl carrier protein from Xanthomonas axonopodis pv. citri (strain 306).